The following is a 301-amino-acid chain: Recombination-associated protein RdgC (301 aa).

It belongs to the RdgC family.

The protein localises to the cytoplasm. It is found in the nucleoid. Functionally, may be involved in recombination. The polypeptide is Recombination-associated protein RdgC (Xanthomonas axonopodis pv. citri (strain 306)).